Reading from the N-terminus, the 345-residue chain is Heat-inducible transcription repressor HrcA (345 aa).

The protein belongs to the HrcA family.

Its function is as follows. Negative regulator of class I heat shock genes (grpE-dnaK-dnaJ and groELS operons). Prevents heat-shock induction of these operons. In Tetragenococcus halophilus (Pediococcus halophilus), this protein is Heat-inducible transcription repressor HrcA.